Consider the following 205-residue polypeptide: Interleukin-6 (205 aa).

The signal sequence occupies residues 1-21; it reads RFTSAFSLGLLLVTATAFPTP. A disulfide bridge links Cys64 with Cys70. Ser73 is subject to Phosphoserine. Cys93 and Cys103 form a disulfide bridge. Asn164 is a glycosylation site (N-linked (GlcNAc...) asparagine).

It belongs to the IL-6 superfamily. As to quaternary structure, component of a hexamer of two molecules each of IL6, IL6R and IL6ST; first binds to IL6R to associate with the signaling subunit IL6ST. Interacts with IL6R (via the N-terminal ectodomain); this interaction may be affected by IL6R-binding with SORL1, hence decreasing IL6 cis signaling. Interacts with SORL1 (via the N-terminal ectodomain); this interaction leads to IL6 internalization and lysosomal degradation. May form a trimeric complex with the soluble SORL1 ectodomain and soluble IL6R receptor; this interaction might stabilize circulating IL6, hence promoting IL6 trans signaling.

It is found in the secreted. In terms of biological role, cytokine with a wide variety of biological functions in immunity, tissue regeneration, and metabolism. Binds to IL6R, then the complex associates to the signaling subunit IL6ST/gp130 to trigger the intracellular IL6-signaling pathway. The interaction with the membrane-bound IL6R and IL6ST stimulates 'classic signaling', whereas the binding of IL6 and soluble IL6R to IL6ST stimulates 'trans-signaling'. Alternatively, 'cluster signaling' occurs when membrane-bound IL6:IL6R complexes on transmitter cells activate IL6ST receptors on neighboring receiver cells. Its function is as follows. IL6 is a potent inducer of the acute phase response. Rapid production of IL6 contributes to host defense during infection and tissue injury, but excessive IL6 synthesis is involved in disease pathology. In the innate immune response, is synthesized by myeloid cells, such as macrophages and dendritic cells, upon recognition of pathogens through toll-like receptors (TLRs) at the site of infection or tissue injury. In the adaptive immune response, is required for the differentiation of B cells into immunoglobulin-secreting cells. Plays a major role in the differentiation of CD4(+) T cell subsets. Essential factor for the development of T follicular helper (Tfh) cells that are required for the induction of germinal-center formation. Required to drive naive CD4(+) T cells to the Th17 lineage. Also required for proliferation of myeloma cells and the survival of plasmablast cells. Functionally, acts as an essential factor in bone homeostasis and on vessels directly or indirectly by induction of VEGF, resulting in increased angiogenesis activity and vascular permeability. Induces, through 'trans-signaling' and synergistically with IL1B and TNF, the production of VEGF. Involved in metabolic controls, is discharged into the bloodstream after muscle contraction increasing lipolysis and improving insulin resistance. 'Trans-signaling' in central nervous system also regulates energy and glucose homeostasis. Mediates, through GLP-1, crosstalk between insulin-sensitive tissues, intestinal L cells and pancreatic islets to adapt to changes in insulin demand. Also acts as a myokine. Plays a protective role during liver injury, being required for maintenance of tissue regeneration. Also has a pivotal role in iron metabolism by regulating HAMP/hepcidin expression upon inflammation or bacterial infection. Through activation of IL6ST-YAP-NOTCH pathway, induces inflammation-induced epithelial regeneration. This is Interleukin-6 (IL6) from Orcinus orca (Killer whale).